Consider the following 163-residue polypeptide: UPF0262 protein RPE_4483 (163 aa).

It belongs to the UPF0262 family.

The polypeptide is UPF0262 protein RPE_4483 (Rhodopseudomonas palustris (strain BisA53)).